The primary structure comprises 36 residues: Probable non-specific lipid-transfer protein (36 aa).

This sequence belongs to the plant LTP family. In terms of processing, phosphorylated by Ca(2+)-dependent protein kinase.

Plant non-specific lipid-transfer proteins transfer phospholipids as well as galactolipids across membranes. May play a role in wax or cutin deposition in the cell walls of expanding epidermal cells and certain secretory tissues. This is Probable non-specific lipid-transfer protein from Pinus pinea (Italian stone pine).